A 140-amino-acid chain; its full sequence is Ribosome-binding factor A (140 aa).

The segment at 115-140 (EDERQQRGDIPPGSDQQPGSDEQPTG) is disordered. Polar residues predominate over residues 128-140 (SDQQPGSDEQPTG).

The protein belongs to the RbfA family. In terms of assembly, monomer. Binds 30S ribosomal subunits, but not 50S ribosomal subunits or 70S ribosomes.

The protein resides in the cytoplasm. Its function is as follows. One of several proteins that assist in the late maturation steps of the functional core of the 30S ribosomal subunit. Associates with free 30S ribosomal subunits (but not with 30S subunits that are part of 70S ribosomes or polysomes). Required for efficient processing of 16S rRNA. May interact with the 5'-terminal helix region of 16S rRNA. The sequence is that of Ribosome-binding factor A from Synechococcus sp. (strain CC9605).